The sequence spans 73 residues: Metallothionein (73 aa).

Cys-15, Cys-20, Cys-26, Cys-28, Cys-32, Cys-34, Cys-39, Cys-46, Cys-48, Cys-52, Cys-54, Cys-58, Cys-64, Cys-66, Cys-70, and Cys-72 together coordinate Cd(2+).

The protein belongs to the metallothionein superfamily. Type 2 family.

Functionally, the metallothioneins are involved in the cellular sequestration of toxic metal ions. This is Metallothionein from Dreissena polymorpha (Zebra mussel).